The chain runs to 728 residues: MVKPKYKGRSTINRSAASTNPDRVQGAGGQNMRDRGTIRRLNMYRQKERRNSRGKVIKPLQYQSTVASGTVARVEPNIKWFGNTRVIKQASLQKFQEEMDKVMKDPYKVVMKQSKLPMSLLHDRIQPHNAKVHILDTESFESTFGPKSQRKRPNLFASDMQSLLENAEMSTESYDQGKDRDLVMEDTGVRNEAQEEIYKKGQSKRIWGELYKVIDSSDVVVQVLDARDPMGTRSPHIEAYLKKEKPWKHLIFVLNKCDLVPTWATKRWVAVLSQDYPTLAFHASLTNPFGKGAFIQLLRQFGKLHTDKKQISVGFIGYPNVGKSSVINTLRSKKVCNVAPIAGETKVWQYITLMRRIFLIDCPGVVYPSEDSETDIVLKGVVQVEKIKAPQDHIGAVLERAKPEYISKTYKIESWENAEDFLEKLALRTGKLLKGGEPDMLTVSKMVLNDWQRGRIPFFVKPPNAELPTDSQLPPSSPLEVPTETTQNNPEEETTETEVERSDSITEKEPEGDCSQDRNSEMQQILARVRQNFGKINVGPQFSADDLVPVEMSDLEDLESSGEEEEQEQEQPGEDAEEERSPDTQEEPVGNDTKAVLRALDEKIAKYQRFLNKAKAKKFSAVRISKDLSEKVFAKYKEEKKTSAEDSDAAPTKKARKWDAQMEEEPSNKTQRMLTCKERRRAARQQQSKKVGVRYYETHNVKNRNRNKKKTSDSEGQKHRRNKFRQKQ.

At M1 the chain carries N-acetylmethionine. The tract at residues 1–33 is disordered; the sequence is MVKPKYKGRSTINRSAASTNPDRVQGAGGQNMR. Positions 10 to 22 are enriched in polar residues; sequence STINRSAASTNPD. A CP-type G domain is found at 207 to 368; sequence WGELYKVIDS…LIDCPGVVYP (162 aa). GTP contacts are provided by residues 317–324 and 361–365; these read GYPNVGKS and DCPGV. Disordered stretches follow at residues 462 to 521, 538 to 595, and 636 to 728; these read PPNA…RNSE, VGPQ…DTKA, and YKEE…RQKQ. A compositionally biased stretch (low complexity) spans 480–489; it reads EVPTETTQNN. The span at 498–520 shows a compositional bias: basic and acidic residues; the sequence is EVERSDSITEKEPEGDCSQDRNS. Position 504 is a phosphoserine (S504). Residues 553–586 are compositionally biased toward acidic residues; it reads SDLEDLESSGEEEEQEQEQPGEDAEEERSPDTQE. The span at 718–728 shows a compositional bias: basic residues; sequence KHRRNKFRQKQ.

It belongs to the TRAFAC class YlqF/YawG GTPase family. NOG2 subfamily. As to quaternary structure, interacts with LYAR and RPL23A. Interacts with the nuclear importin-beta receptor and, at a lower extent, with importin-alpha.

The protein localises to the nucleus. Its subcellular location is the nucleolus. Its function is as follows. GTPase that associates with pre-60S ribosomal subunits in the nucleolus and is required for their nuclear export and maturation. May promote cell proliferation possibly by increasing p53/TP53 protein levels, and consequently those of its downstream product CDKN1A/p21, and decreasing RPL23A protein levels. The chain is Nucleolar GTP-binding protein 2 (Gnl2) from Mus musculus (Mouse).